Consider the following 175-residue polypeptide: NAD(P)H-quinone oxidoreductase subunit I, chloroplastic (175 aa).

2 consecutive 4Fe-4S ferredoxin-type domains span residues 55-84 (GRIH…VNWE) and 95-124 (QTYS…MTEE). [4Fe-4S] cluster is bound by residues Cys64, Cys67, Cys70, Cys74, Cys104, Cys107, Cys110, and Cys114.

The protein belongs to the complex I 23 kDa subunit family. NDH is composed of at least 16 different subunits, 5 of which are encoded in the nucleus. The cofactor is [4Fe-4S] cluster.

Its subcellular location is the plastid. The protein localises to the chloroplast thylakoid membrane. The enzyme catalyses a plastoquinone + NADH + (n+1) H(+)(in) = a plastoquinol + NAD(+) + n H(+)(out). It catalyses the reaction a plastoquinone + NADPH + (n+1) H(+)(in) = a plastoquinol + NADP(+) + n H(+)(out). NDH shuttles electrons from NAD(P)H:plastoquinone, via FMN and iron-sulfur (Fe-S) centers, to quinones in the photosynthetic chain and possibly in a chloroplast respiratory chain. The immediate electron acceptor for the enzyme in this species is believed to be plastoquinone. Couples the redox reaction to proton translocation, and thus conserves the redox energy in a proton gradient. This is NAD(P)H-quinone oxidoreductase subunit I, chloroplastic from Chlorokybus atmophyticus (Soil alga).